The chain runs to 627 residues: MITSELSDFLEINEKNSVLRGISASDKILSSGICQLLFSENGHWRIPNGGTAVALFLKNSTERYYRIIVMEPSADPDWEPTVQFDFLIRDKKFETMQEHARLLVFEAESRYIGLNFYDSKECENFHNSVCKRQTRSTDKAKQPALEGKTKKKSSFFHDPFKSHREPRKQVEIEAPTDFRHVDGVKLTDVQEDLYMQVNNPEEEEIVKQLIVRNEDHIRQSLMVKKESQTVKEVKDKNKDKVKTSKSFFGRNKPKVEDVSQPIVPVITGDPLNPDWTVTAATSFKHSHTFSADPIKDPSVLLNRSTSVRVRGSLSTPRIPTHRDSYRSATKPDTVPKQTPPPTHNSYVLPHIDERMTRKMILMKNHQNLREEVLPFELEVGNYVSFPNHTHCSEKPIAEAPLRPPVRPAPIVPTSAGLCLVLAASFPTSSTPSRFLNPFPAPLPAESFFGNSKSKIAYFIKPTNEQPQELFQTPVQIEKIFSSTPSSPVSNAAIIDGMKNISLSDSSTSVAQDIAMKVPTPLPRTSKIISASSPLPPSQDEINPLIEMVDQSSSKSETQIPVTECSQSHLNGKGSAAQIQSADFDKVLNQLLSIKVNSEKSKQSADLELLLVSIEKLIQNYLGFHHED.

Residues 21-136 (GISASDKILS…NSVCKRQTRS (116 aa)) enclose the WH1 domain. Residues 310–347 (RGSLSTPRIPTHRDSYRSATKPDTVPKQTPPPTHNSYV) are disordered.

This is an uncharacterized protein from Caenorhabditis elegans.